A 159-amino-acid chain; its full sequence is Dihydrofolate reductase (159 aa).

In terms of domain architecture, DHFR spans 1 to 158; sequence MISLIAALAV…HSYCFEILER (158 aa). I5 is a binding site for substrate. Residues A7 and 13–19 contribute to the NADP(+) site; that span reads VIGMENA. A substrate-binding site is contributed by D27. 45–46 is a binding site for NADP(+); it reads HT. Positions 52 and 57 each coordinate substrate. NADP(+) is bound by residues 63 to 64, K76, and 95 to 102; these read SS and GGGRVYEQ. T113 is a substrate binding site.

It belongs to the dihydrofolate reductase family.

It catalyses the reaction (6S)-5,6,7,8-tetrahydrofolate + NADP(+) = 7,8-dihydrofolate + NADPH + H(+). The protein operates within cofactor biosynthesis; tetrahydrofolate biosynthesis; 5,6,7,8-tetrahydrofolate from 7,8-dihydrofolate: step 1/1. Its function is as follows. Key enzyme in folate metabolism. Catalyzes an essential reaction for de novo glycine and purine synthesis, and for DNA precursor synthesis. This chain is Dihydrofolate reductase (folA), found in Escherichia coli O6:H1 (strain CFT073 / ATCC 700928 / UPEC).